The chain runs to 664 residues: Acid beta-fructofuranosidase 4, vacuolar (664 aa).

The Cytoplasmic portion of the chain corresponds to 1 to 43 (MASSDALLPISAREEEPLCPYTRLPMADPNQETHGPRRRRPFK). The propeptide at 1-108 (MASSDALLPI…WKLSGDRNTP (108 aa)) is removed in mature form. 2 short sequence motifs (critical for endoplasmic reticulum export) span residues 7–8 (LL) and 9–10 (PI). The Critical for trafficking from the trans-Golgi network to the prevacuolar compartment and from the prevacuolar compartment to the central vacuole signature appears at 14–16 (EEE). A helical; Signal-anchor for type II membrane protein membrane pass occupies residues 44-64 (GLLAVSFGLLFIAFYVALIAT). At 65–664 (HDGSRSNDEG…DEAVRALSRT (600 aa)) the chain is on the lumenal side. Residue N113 is glycosylated (N-linked (GlcNAc...) asparagine). Substrate-binding positions include 132 to 135 (WMND), Q151, W159, 194 to 195 (WT), and 258 to 259 (RD). D135 is a catalytic residue. N-linked (GlcNAc...) (complex) asparagine glycosylation is present at N280. Substrate is bound by residues E313 and D346. N-linked (GlcNAc...) asparagine glycosylation is found at N362 and N498. C510 and C558 are disulfide-bonded.

It belongs to the glycosyl hydrolase 32 family. May be present in two forms, a 70 kDa monomer and a heterodimer of the 30 kDa and 38 kDa subunits. The ratio of the levels of the two forms within cells appears to be regulated developmentally. As to expression, mostly expressed in stems, roots and flowers, and, to a lower extent, in mature leaves.

The protein localises to the vacuole. It is found in the endoplasmic reticulum membrane. The protein resides in the golgi apparatus membrane. Its subcellular location is the golgi apparatus. It localises to the trans-Golgi network membrane. The protein localises to the prevacuolar compartment membrane. It is found in the vacuole membrane. The protein resides in the vacuole lumen. It catalyses the reaction Hydrolysis of terminal non-reducing beta-D-fructofuranoside residues in beta-D-fructofuranosides.. The protein operates within glycan biosynthesis; sucrose metabolism. With respect to regulation, inhibited by C/VIF1 and C/VIF2. Functionally, possible role in the continued mobilization of sucrose to sink organs. Regulates root elongation. This chain is Acid beta-fructofuranosidase 4, vacuolar, found in Arabidopsis thaliana (Mouse-ear cress).